The following is a 278-amino-acid chain: Pantothenate synthetase (278 aa).

27–34 (MGYLHEGH) is a binding site for ATP. Histidine 34 serves as the catalytic Proton donor. Glutamine 58 is a (R)-pantoate binding site. A beta-alanine-binding site is contributed by glutamine 58. 144–147 (GQKD) contacts ATP. Glutamine 150 contributes to the (R)-pantoate binding site. ATP is bound by residues valine 173 and 181 to 184 (MSSR).

The protein belongs to the pantothenate synthetase family. As to quaternary structure, homodimer.

It localises to the cytoplasm. It catalyses the reaction (R)-pantoate + beta-alanine + ATP = (R)-pantothenate + AMP + diphosphate + H(+). It participates in cofactor biosynthesis; (R)-pantothenate biosynthesis; (R)-pantothenate from (R)-pantoate and beta-alanine: step 1/1. Catalyzes the condensation of pantoate with beta-alanine in an ATP-dependent reaction via a pantoyl-adenylate intermediate. The chain is Pantothenate synthetase from Roseiflexus castenholzii (strain DSM 13941 / HLO8).